The following is a 370-amino-acid chain: MPFAPLQNDTFLRACWRQATDHTPVWLMRQAGRYLPEYVATRARAGSFMGLATNTDYATEVTLQPLERYPLDAAILFSDILTVPDAMGLGLSFEAGEGPRFARPVQGEAAVAALEVPDMAKLRYVFDAVASIRKALDGRVPLIGFSGSPWTLACYMVEGAGSSDYRLVKSMLYSRPDLMHRLLAVNADSVAAYLNAQIDAGAQAVMVFDSWGGVLADGAFQEFSLAYTARVLAGLQRNGADGQPVPRIVFTKGGGLWLEAMRELDCEVLGVDWTVNLSAARRLVGEGTDAKAKALQGNIDPNVLFAPPAQIEAEVAKVLQAFGQPHADAAAKGPTHIFNLGHGISQFTPPDHVAALVQAVHAQSRALRKG.

Substrate-binding positions include 29-33, Asp79, Tyr155, Ser210, and His342; that span reads RQAGR.

This sequence belongs to the uroporphyrinogen decarboxylase family. Homodimer.

The protein resides in the cytoplasm. The enzyme catalyses uroporphyrinogen III + 4 H(+) = coproporphyrinogen III + 4 CO2. It participates in porphyrin-containing compound metabolism; protoporphyrin-IX biosynthesis; coproporphyrinogen-III from 5-aminolevulinate: step 4/4. Its function is as follows. Catalyzes the decarboxylation of four acetate groups of uroporphyrinogen-III to yield coproporphyrinogen-III. The chain is Uroporphyrinogen decarboxylase from Variovorax paradoxus (strain S110).